The chain runs to 432 residues: Enolase (432 aa).

Residue glutamine 163 coordinates (2R)-2-phosphoglycerate. Glutamate 205 serves as the catalytic Proton donor. 3 residues coordinate Mg(2+): aspartate 241, glutamate 289, and aspartate 316. (2R)-2-phosphoglycerate is bound by residues lysine 341, arginine 370, serine 371, and lysine 392. Lysine 341 functions as the Proton acceptor in the catalytic mechanism.

Belongs to the enolase family. It depends on Mg(2+) as a cofactor.

Its subcellular location is the cytoplasm. It localises to the secreted. The protein resides in the cell surface. The catalysed reaction is (2R)-2-phosphoglycerate = phosphoenolpyruvate + H2O. Its pathway is carbohydrate degradation; glycolysis; pyruvate from D-glyceraldehyde 3-phosphate: step 4/5. Catalyzes the reversible conversion of 2-phosphoglycerate (2-PG) into phosphoenolpyruvate (PEP). It is essential for the degradation of carbohydrates via glycolysis. This chain is Enolase, found in Treponema pallidum (strain Nichols).